We begin with the raw amino-acid sequence, 1084 residues long: SAETEKEMANMKEEFEKTKESLAKAEAKRKELEEKMVALMQEKNDLQLQVQAEADSLADAEERQDLIKTKIQLEAKIKEVTERAEDEEEINAELTAKKRKLEDECSELKKDIDDLELTLAKVEKEKHATENKVKNLTEEMAGLDETIAKLTKEKKALQEAHQQTLDDLQAEEDKVNTLTKAKTKLEQQVDDLEGSLEQEKKIRMDLERAKRKLEGDLKLAQETSMDIENDKQQLDEKLKKLEFMTNLQSKIEDEQALMTNLQRIEELEEEIEAERASRAKAEKQRSDLSRELEEISERLEEAGGATSAQIEMNKKREAEFEKMRRDLEEATLQHEATAAALRKKHADSVAELGEQIDNLQRVKQKLEKEKSELKMEIDDLAGNMETVSKAKGNLEKMCRTLEDQLSEVKTKEEEHQRLINELSAQKARLHTESGEFSRQLDEKDAMVSQLSRGGQAFTQQIEGLKRQLEEETKAKSALAHALQSSRRDCDLLREQYEEEQEAKAELQRAMSKANSEVSQWRTKCETDAIQRTEELEEAKKKLAQRLQDAEEHVEAVNSKCASLEKTKQRLQNEAEDLMIDVERSNATCARMDKKQRNFDKVLAEWKHKYEETQAELEASQKESRSLSTEVFKVKNAYEESLDHLETLKRENKNLQQEISDLTEQIAESAKHIHELEKVKKQIDQEKSELQAALEEAEGSLEHEEGKILRIQLELNQVKSEIDRKIAEKDEEIDQLKRNHLRVVESMQSTLDAEIRSRNDALRIKKKMEGDLNEMEIQLNHANRQAAEAIKNLRNTQGILKDTQLHLDDAVRGQDDHKEQLAMVERRANLMQAEIEELRASLEQTERSRRVADQDLLDASERVQLLHTQNTSLINTKKKLETDISQIQGEMEDIVQEARNAEEKAKKAITDAAMMAEELKKEQDTSAHLERMKKNMEQTVKDLQQRLDEAEQLALKGGKKQIQKLEARVKELENEVESEQKRNVEAVKGLRKHERRVKELTYQTEEDRKNVLRLQDLVDKLQSKVKAYKRQAEEAEEQSNINLSKFRKLQHELEEAEERADIAESQVNKLRVKSRDVHSKVISEE.

Disordered stretches follow at residues 1–20, 270–292, and 298–317; these read SAET…KTKE, EIEA…SREL, and RLEE…KKRE. Residues 1–258 form an alpha-helical tailpiece (S2) region; it reads SAETEKEMAN…SKIEDEQALM (258 aa). The rodlike tail (S2 and LMM domains) stretch occupies residues 259 to 1084; that stretch reads TNLQRIEELE…DVHSKVISEE (826 aa). Residues 273–292 are compositionally biased toward basic and acidic residues; that stretch reads AERASRAKAEKQRSDLSREL. Positions 455–1084 form a coiled coil; it reads QAFTQQIEGL…DVHSKVISEE (630 aa).

Muscle myosin is a hexameric protein that consists of 2 heavy chain subunits (MHC), 2 alkali light chain subunits (MLC) and 2 regulatory light chain subunits (MLC-2).

Its subcellular location is the cytoplasm. The protein resides in the myofibril. Functionally, muscle contraction. The protein is Myosin heavy chain, skeletal muscle of Oryctolagus cuniculus (Rabbit).